The sequence spans 405 residues: MIIDQRALGFGSGERAVFASDPWTTRGRLFPEAGSLTRSEFQRDRDRIVHTTAFRRLKHKTQVFISPDGDHYRTRLTHTIEVAQIARALARALKLDEDLAEGVALVHDFGHTPFGHTGEDALDAVLLPYGGFDHNAQSLRIVTKLERRYAEYDGINLTWETLEGLVKHNGPLVNAKGEGIKGPVPLPILEYCVLQDLEIGSYASLEAQVAAIADDIAYNTHDIDDGLRAGYLTFEMLEEVPFLSKLMAEVRGKYPVLDKERFANEIMRRQITHMVEDVIGVAQQNLARLKPQSAADIRAADFTVATFSPEMAETDRQIKKLLFGHIYRHPEIMRIRAGATQIVTDLFHRYMETPAEMQSHYWVDSISGMSVAAKARHVGDYLAGMTDSYALRAHQRLFDHTPDLR.

The HD domain occupies 75–219 (RLTHTIEVAQ…AAIADDIAYN (145 aa)).

Belongs to the dGTPase family. Type 2 subfamily.

In Agrobacterium fabrum (strain C58 / ATCC 33970) (Agrobacterium tumefaciens (strain C58)), this protein is Deoxyguanosinetriphosphate triphosphohydrolase-like protein.